The chain runs to 375 residues: Platelet-derived growth factor receptor-like protein (375 aa).

A signal peptide spans Met1–Gly21. The interval Ala20–Lys63 is disordered. Basic residues predominate over residues Pro40–Pro50. The 113-residue stretch at Pro47–Lys159 folds into the Ig-like C2-type 1 domain. Residues Cys96 and Cys143 are joined by a disulfide bond. A glycan (N-linked (GlcNAc...) asparagine) is linked at Asn219. The 104-residue stretch at Pro272–Ser375 folds into the Ig-like C2-type 2 domain. A disulfide bond links Cys293 and Cys357.

Forms a complex composed of PDGFRL, TNK2 and GRB2.

It is found in the secreted. In Mus musculus (Mouse), this protein is Platelet-derived growth factor receptor-like protein (Pdgfrl).